The chain runs to 467 residues: Chromosomal replication initiator protein DnaA (467 aa).

Residues 1 to 74 are domain I, interacts with DnaA modulators; that stretch reads MSADVWSQGC…ESVLSDLAGK (74 aa). A domain II region spans residues 74-130; the sequence is KPVRLDLQLAAREAPPRPSSDAPRSNGHPQAAGQWLGAPSSSNAGAYTQASAPTPTH. Positions 85–127 are disordered; the sequence is REAPPRPSSDAPRSNGHPQAAGQWLGAPSSSNAGAYTQASAPT. Over residues 112–127 the composition is skewed to polar residues; the sequence is PSSSNAGAYTQASAPT. Residues 131–347 form a domain III, AAA+ region region; that stretch reads RLNTALTFDT…GALRKVLAYA (217 aa). ATP is bound by residues G175, G177, K178, and T179. A domain IV, binds dsDNA region spans residues 348-467; it reads RFSQKDINIA…LHVLEQTLKG (120 aa).

This sequence belongs to the DnaA family. As to quaternary structure, oligomerizes as a right-handed, spiral filament on DNA at oriC.

It localises to the cytoplasm. Its function is as follows. Plays an essential role in the initiation and regulation of chromosomal replication. ATP-DnaA binds to the origin of replication (oriC) to initiate formation of the DNA replication initiation complex once per cell cycle. Binds the DnaA box (a 9 base pair repeat at the origin) and separates the double-stranded (ds)DNA. Forms a right-handed helical filament on oriC DNA; dsDNA binds to the exterior of the filament while single-stranded (ss)DNA is stabiized in the filament's interior. The ATP-DnaA-oriC complex binds and stabilizes one strand of the AT-rich DNA unwinding element (DUE), permitting loading of DNA polymerase. After initiation quickly degrades to an ADP-DnaA complex that is not apt for DNA replication. Binds acidic phospholipids. In Methylibium petroleiphilum (strain ATCC BAA-1232 / LMG 22953 / PM1), this protein is Chromosomal replication initiator protein DnaA.